The chain runs to 238 residues: ATP synthase subunit a (238 aa).

The next 5 helical transmembrane spans lie at 15–35 (IFNLTMLAMTLLIVGVIFVFI), 76–96 (YSLFFLCLFLFMVIANNLGLM), 111–131 (PTANLQYDLTLSFLVILLTHI), 167–187 (LALRIFGNIFAGEVMTSLLLL), and 208–230 (AFSVFISCIQAYVFTLLTSVYLG).

It belongs to the ATPase A chain family. As to quaternary structure, F-type ATPases have 2 components, CF(1) - the catalytic core - and CF(0) - the membrane proton channel. CF(1) has five subunits: alpha(3), beta(3), gamma(1), delta(1), epsilon(1). CF(0) has three main subunits: a(1), b(2) and c(9-12). The alpha and beta chains form an alternating ring which encloses part of the gamma chain. CF(1) is attached to CF(0) by a central stalk formed by the gamma and epsilon chains, while a peripheral stalk is formed by the delta and b chains.

The protein resides in the cell membrane. Its function is as follows. Key component of the proton channel; it plays a direct role in the translocation of protons across the membrane. The protein is ATP synthase subunit a of Streptococcus pneumoniae (strain 70585).